The chain runs to 225 residues: MSRKKAVILVSGGLDSTTVIAIARSQGYDCYTISFDYGQRHRAELKAAEITAKAHGSLEHKVIRLDLGAIGGSALTDTSIDVPEEETSGIPVTYVPARNTVFLSIALGWAEVLGALDIFIGVNAVDYSGYPDCRPDYIAAYETMANLATKRGIEGERLHIRTPLINLTKAQIIQQGLALGVDYRLTVSCYQANDGGEACGKCDSCRLRKQGFEQAGVADPTRYAF.

10 to 20 (VSGGLDSTTVI) lines the ATP pocket. 4 residues coordinate Zn(2+): cysteine 189, cysteine 199, cysteine 202, and cysteine 205.

The protein belongs to the QueC family. Zn(2+) serves as cofactor.

It carries out the reaction 7-carboxy-7-deazaguanine + NH4(+) + ATP = 7-cyano-7-deazaguanine + ADP + phosphate + H2O + H(+). The protein operates within purine metabolism; 7-cyano-7-deazaguanine biosynthesis. In terms of biological role, catalyzes the ATP-dependent conversion of 7-carboxy-7-deazaguanine (CDG) to 7-cyano-7-deazaguanine (preQ(0)). This is 7-cyano-7-deazaguanine synthase from Cellvibrio japonicus (strain Ueda107) (Pseudomonas fluorescens subsp. cellulosa).